A 591-amino-acid polypeptide reads, in one-letter code: Probable auxin efflux carrier component 3b (591 aa).

The Extracellular portion of the chain corresponds to 1-6; it reads MISWHE. The helical transmembrane segment at 7–27 threads the bilayer; that stretch reads LYMVLSAVVPLYVAMMVAYGS. Residues 28 to 38 are Cytoplasmic-facing; the sequence is VRWWGVLTPEQ. The helical transmembrane segment at 39-59 threads the bilayer; it reads CSGINRFVAVIAVPLLSFHFI. Valine 51 serves as a coordination point for (indol-3-yl)acetate. Topologically, residues 60–70 are extracellular; sequence SSSDPYAMNLR. The chain crosses the membrane as a helical span at residues 71–93; sequence FVAADTLQKVLVLAALAAWSRFP. Over 94-107 the chain is Cytoplasmic; the sequence is ARFVPPAWPPLDCS. The helical transmembrane segment at 108-128 threads the bilayer; that stretch reads ITLFSVSTLPNTLVMGIPLLV. Positions 118 and 120 each coordinate (indol-3-yl)acetate. Residues 129-137 lie on the Extracellular side of the membrane; the sequence is SMYGPYSGD. Residues 138–158 form a helical membrane-spanning segment; that stretch reads LMVQIVVLQSIVWYTLLLFLF. Tyrosine 151 serves as a coordination point for (indol-3-yl)acetate. Over 159–450 the chain is Cytoplasmic; it reads EFRAARVLIA…LIRNPNTYAS (292 aa). Composition is skewed to polar residues over residues 243–254 and 283–292; these read SRNATPRGSTFT and SSSRQHTPRP. Disordered stretches follow at residues 243–269, 283–313, 344–374, and 392–420; these read SRNA…SALR, SSSR…APTN, ETRR…GERA, and AGAK…RARG. Over residues 395–407 the composition is skewed to low complexity; the sequence is KTEQQTTAVTTTT. A helical membrane pass occupies residues 451 to 471; it reads LIGLTWSLIAFRFHITMPIIV. At 472 to 474 the chain is on the extracellular side; the sequence is AKS. Residues 475–495 form a helical membrane-spanning segment; that stretch reads ISILSDAGLGMAMFSLGLFMA. At 496-511 the chain is on the cytoplasmic side; it reads TQPKIIACGYSVAAAS. A helical membrane pass occupies residues 512–532; it reads MGVRFFFGPAIMAAASAAVGI. The Extracellular portion of the chain corresponds to 533-535; that stretch reads RGT. A helical membrane pass occupies residues 536–556; that stretch reads LLRIAIVQAALPQGIVPFVFA. (indol-3-yl)acetate-binding residues include isoleucine 550 and valine 551. Topologically, residues 557–568 are cytoplasmic; sequence KEYNLHATILCT. A helical transmembrane segment spans residues 569 to 589; that stretch reads LVIFGMLIALPITLVYYIILG. Residues 590-591 are Extracellular-facing; it reads LL.

The protein belongs to the auxin efflux carrier (TC 2.A.69.1) family. Homodimer. In terms of tissue distribution, expressed in stem bases and leaves.

Its subcellular location is the membrane. Its function is as follows. May act as a component of the auxin efflux carrier. This chain is Probable auxin efflux carrier component 3b, found in Oryza sativa subsp. japonica (Rice).